The following is an 82-amino-acid chain: Small, acid-soluble spore protein gamma-type (82 aa).

2 stretches are compositionally biased toward polar residues: residues 1–24 (MANSNNKTNAQQVRKQNQQSASGQ) and 32–50 (ASETNVQQVRKQNQQSAAG). The interval 1 to 82 (MANSNNKTNA…SAEQNKQQNS (82 aa)) is disordered. 2 consecutive repeats follow at residues 19–45 (QSASGQGQFGTEFASETNVQQVRKQNQ) and 46–72 (QSAAGQGQFGTEFASETDAQQVRQQNQ). Residues 69–82 (QQNQSAEQNKQQNS) are compositionally biased toward low complexity.

It belongs to the gamma-type SASP family.

Its function is as follows. SASP are bound to spore DNA. They are double-stranded DNA-binding proteins that cause DNA to change to an a-like conformation. They protect the DNA backbone from chemical and enzymatic cleavage and are thus involved in dormant spore's high resistance to UV light. This chain is Small, acid-soluble spore protein gamma-type, found in Bacillus subtilis.